The following is a 611-amino-acid chain: BTB/POZ domain-containing protein 9 (611 aa).

In terms of domain architecture, BTB spans 36–104 (GDVTFVVEKK…IYTGRATLTD (69 aa)). In terms of domain architecture, BACK spans 142 to 240 (VCMTFDVASL…SLTELLNVVR (99 aa)). The disordered stretch occupies residues 560 to 611 (QSAQKDSSDEPGTGGASAAGQQLDPHALQAPSGSSLPSSPGSNSRSPNRQHQ). Low complexity predominate over residues 586-611 (ALQAPSGSSLPSSPGSNSRSPNRQHQ).

The chain is BTB/POZ domain-containing protein 9 (BTBD9) from Bos taurus (Bovine).